Reading from the N-terminus, the 296-residue chain is Urease operon transcriptional activator (296 aa).

Residues 171-268 (QAITHLITQE…NMTPSQFRLQ (98 aa)) form the HTH araC/xylS-type domain. 2 consecutive DNA-binding regions (H-T-H motif) follow at residues 188–209 (DDVA…NREG) and 235–258 (VFQI…KRKY).

Its function is as follows. Positive regulator of the expression of the urease operon. This chain is Urease operon transcriptional activator (ureR), found in Escherichia coli.